The chain runs to 302 residues: GATA transcription factor 28 (302 aa).

Residues 47 to 66 (NAGGMSEGVETDIPSHPGNV) are disordered. The Tify domain maps to 77-112 (GSEQGDQLTLSFQGQVYVFDSVLPEKVQAVLLLLGG). The interval 119 to 141 (APPGLGSPHQNNRVSSLPGTPQR) is disordered. Residues 126–141 (PHQNNRVSSLPGTPQR) are compositionally biased toward polar residues. A CCT domain is found at 147–189 (RLASLVRFREKRKGRNFDKKIRYTVRKEVALRMQRNKGQFTSA). A GATA-type zinc finger spans residues 217–273 (QHQEISCRHCGIGEKSTPMMRRGPAGPRTLCNACGLMWANKGAFRDLSKASPQTAQN).

The protein belongs to the type IV zinc-finger family. Class C subfamily. Predominantly expressed in shoot apices, inflorescences and roots.

It localises to the nucleus. Its function is as follows. Transcriptional activator that specifically binds 5'-GATA-3' or 5'-GAT-3' motifs within gene promoters. This Arabidopsis thaliana (Mouse-ear cress) protein is GATA transcription factor 28 (GATA28).